The following is an 837-amino-acid chain: MTRVVKALFAADTDCAELLADILTGQNNSGSLYCLLHNCRPEDVSWEVTRLSLCLPVRRPGGAEGRCAEVFKIKLPTEEAGQFLFNCGSLSAKQVYESYSKRAAYETFQPILEVLGLSGDEYSIKNAVTWGRGKFVASLRKYFKLTTSPHWFINTFGAFENHFVLVSSCYYFFPVSVSTVDTLCHLAMLYSSKKGCPLSSITTLRELGAVATQSPALDRVENFYLYVCDKLARDTLECEAVDRCINEFRGQLMLSDQDLVHYIYLSFFQCFNNQKFLAYSQCTNPCNLNTTMLREPMLVANIDSDFKHKMATYYNKNTYLSNYVLLRGIHLHPVVGYGQECLRSAHATGGHSIWWGESHQVSDMLKTINVEYPDICLHEEFRGLMDLAAITDRCSIFGNPIHYLTDCATSGAIPIYRSELSHRHYFLAVFSDDIEYFWKKTIFLPPESFCLGAQDTMLTRAITYTEMHCSMSSVAEQIHVSRHEYFNPKLPVFNWVLDLDLPISEGNLHIDSIYSLCLLIRESVLDILKLLGPVEPDHEVFFFKSACINLCDPGEASWRPSTFCTCTEKLGMRVVTRFPPGICLKGSEPLTQLTKILNRVIKLGCGSLLNLSAFQLSNGPFDVGIYGRGRSIRLPHTYKVGKCGQLERLLKLFVCHPEATDKFPYLQNSLKLNRLLHHAQSQDPRGPLKIIYRVEDINEDFLYKHTQKQLPVKHEAVIPSIERLLDTSLNCFLLSKVWPKCFGTIRSYMSEEKLQQFSRVVFHPTNHCIVQVRPDRGNNFKCLRYNHRGSSKSVRVFLILHLKEETKLIVTFMSQCFANKCQSNKAMAHFSVFVDLS.

The CHC2-type zinc finger occupies 782-821 (CLRYNHRGSSKSVRVFLILHLKEETKLIVTFMSQCFANKC).

This sequence belongs to the herpesviridae DNA primase family. In terms of assembly, associates with the helicase and the primase-associated factor to form the helicase-primase factor.

The protein resides in the host nucleus. Functionally, essential component of the helicase/primase complex. Unwinds the DNA at the replication forks and generates single-stranded DNA for both leading and lagging strand synthesis. The primase initiates primer synthesis and thereby produces large amount of short RNA primers on the lagging strand that the polymerase elongates using dNTPs. The chain is DNA primase (56) from Connochaetes taurinus (Blue wildebeest).